The following is a 262-amino-acid chain: 4-hydroxy-2-oxo-heptane-1,7-dioate aldolase (262 aa).

His-45 (proton acceptor) is an active-site residue. Residue Gln-147 participates in substrate binding. Glu-149 lines the a divalent metal cation pocket. Positions 174 and 175 each coordinate substrate. Residue Asp-175 coordinates a divalent metal cation.

It belongs to the HpcH/HpaI aldolase family. Homohexamer; trimer of dimers. A divalent metal cation serves as cofactor.

The enzyme catalyses 4-hydroxy-2-oxoheptanedioate = succinate semialdehyde + pyruvate. It participates in aromatic compound metabolism; 4-hydroxyphenylacetate degradation; pyruvate and succinate semialdehyde from 4-hydroxyphenylacetate: step 7/7. Catalyzes the reversible retro-aldol cleavage of 4-hydroxy-2-ketoheptane-1,7-dioate (HKHD) to pyruvate and succinic semialdehyde. The sequence is that of 4-hydroxy-2-oxo-heptane-1,7-dioate aldolase from Shigella sonnei (strain Ss046).